The primary structure comprises 393 residues: Rubredoxin-NAD(+) reductase (393 aa).

Residues 9–12 (SGMA), 33–34 (CA), Lys42, Val80, Glu162, Asp282, Val294, and Lys325 contribute to the FAD site.

Belongs to the FAD-dependent oxidoreductase family. Homodimer. Requires FAD as cofactor.

The protein localises to the cytoplasm. It carries out the reaction 2 reduced [rubredoxin] + NAD(+) + H(+) = 2 oxidized [rubredoxin] + NADH. It functions in the pathway hydrocarbon metabolism; alkane degradation. Involved in the hydrocarbon hydroxylating system, which transfers electrons from NADH to rubredoxin reductase and then through rubredoxin to alkane 1 monooxygenase. The sequence is that of Rubredoxin-NAD(+) reductase (rubB) from Acinetobacter baylyi (strain ATCC 33305 / BD413 / ADP1).